Reading from the N-terminus, the 331-residue chain is L-lactate dehydrogenase A chain (331 aa).

Residues 29–57 (GMVG…MEDK) and R98 contribute to the NAD(+) site. Residues R105, N137, and R168 each contribute to the substrate site. N137 lines the NAD(+) pocket. Catalysis depends on H192, which acts as the Proton acceptor. T247 contributes to the substrate binding site.

The protein belongs to the LDH/MDH superfamily. LDH family. In terms of assembly, homotetramer.

It localises to the cytoplasm. The enzyme catalyses (S)-lactate + NAD(+) = pyruvate + NADH + H(+). Its pathway is fermentation; pyruvate fermentation to lactate; (S)-lactate from pyruvate: step 1/1. Functionally, interconverts simultaneously and stereospecifically pyruvate and lactate with concomitant interconversion of NADH and NAD(+). The polypeptide is L-lactate dehydrogenase A chain (ldha) (Harpagifer antarcticus (Antarctic spiny plunderfish)).